A 503-amino-acid polypeptide reads, in one-letter code: Diels-Alderase cghA (503 aa).

This sequence belongs to the Diels-Alderase family.

The catalysed reaction is (2S)-3-[(2S)-3,5-dioxo-4-[(2E,4R,6R,8E,10E,12E)-4,6,12-trimethyltetradeca-2,8,10,12-tetraenoyl]pyrrolidin-2-yl]-2-hydroxy-2-methylpropanoate = sch 210972. Its pathway is secondary metabolite biosynthesis. In terms of biological role, diels-Alderase; part of the gene cluster that mediates the biosynthesis of the tetramic acid Sch210972, a potential anti-HIV fungal natural product that contains a decalin core. The PKS module of cghG together with the enoylreductase cghC catalyze the formation of the polyketide unit which is then conjugated to 4-hydroxyl-4-methyl glutamate (HMG) by the condensation domain of the cghG NRPS module. One unique structural feature of Sch210972 is the tetramic acid motif proposed to be derived from the non-proteinogenic amino acid HMG, by a Dieckmann-type condensation catalyzed by the reductase domain of cghG. The aldolase cghB catalyzes the aldol condensation of 2 molecules of pyruvic acid to yield the intermediate 4-hydroxyl-4-methyl-2-oxoglutarate (HMOG), which can then be stereoselectively transaminated by an unidentified enzyme to form HMG. The Diels-Alderase cghA then uses the Dieckmann product released by cghG as substrate and catalyzes the Diels-Alder cycloaddition to form the decalin ring of Sch210972. CghA also suppresses the nonenzymatic formation of the alternative stereoisomer. The protein is Diels-Alderase cghA of Chaetomium globosum (strain ATCC 6205 / CBS 148.51 / DSM 1962 / NBRC 6347 / NRRL 1970) (Soil fungus).